The primary structure comprises 1004 residues: DNA-directed RNA polymerase subunit beta' (1004 aa).

Mg(2+) is bound by residues Asp-388, Asp-390, and Asp-392. The Zn(2+) site is built by Cys-757, Cys-831, Cys-838, and Cys-841.

Belongs to the RNA polymerase beta' chain family. The RNAP catalytic core consists of 2 alpha, 1 beta, 1 beta' and 1 omega subunit. When a sigma factor is associated with the core the holoenzyme is formed, which can initiate transcription. The cofactor is Mg(2+). Zn(2+) serves as cofactor.

The catalysed reaction is RNA(n) + a ribonucleoside 5'-triphosphate = RNA(n+1) + diphosphate. Functionally, DNA-dependent RNA polymerase catalyzes the transcription of DNA into RNA using the four ribonucleoside triphosphates as substrates. This is DNA-directed RNA polymerase subunit beta' from Oenococcus oeni (Leuconostoc oenos).